A 687-amino-acid chain; its full sequence is DnaJ protein ERDJ2A (687 aa).

The Lumenal segment spans residues 1-8 (MAASEENS). A helical transmembrane segment spans residues 9–29 (ALFPIFILTIMAIPLVPYTMV). The Cytoplasmic portion of the chain corresponds to 30–65 (KLSGALSKKQRTIHCQCLECDRSGKYKRSLFKKISN). A helical transmembrane segment spans residues 66-86 (FSTWSNLTLVLLWVVMIFLIY). The Lumenal segment spans residues 87–190 (YTKNMSREAQ…FLLDIDGASG (104 aa)). N90 is a glycosylation site (N-linked (GlcNAc...) asparagine). A J domain is found at 99-164 (DPFSILGLEP…VSRENFEKYG (66 aa)). A helical membrane pass occupies residues 191-211 (GILLLWIVGVCILLPLVIAVI). Residues 205 to 603 (PLVIAVIYLS…IGCDKKQALK (399 aa)) enclose the SEC63 domain. The Cytoplasmic segment spans residues 212 to 687 (YLSRSSKYTG…SSEESGSEEE (476 aa)). The interval 619–687 (SDEGAIAEEG…SSEESGSEEE (69 aa)) is disordered. Acidic residues predominate over residues 623 to 654 (AIAEEGMEEEDEIEEEDYDDDYESEYSEDEDE).

Interacts with OEP61/TPR7. As to expression, expressed in leaves, flower buds and flowers.

The protein resides in the endoplasmic reticulum membrane. Required for integral membrane and secreted preprotein translocation across the endoplasmic reticulum membrane. This is DnaJ protein ERDJ2A (ERDJ2A) from Arabidopsis thaliana (Mouse-ear cress).